The primary structure comprises 61 residues: Defensin BmKDfsin1 (61 aa).

A signal peptide spans 1–25 (MKTIVLLFVLVLVFALLVKMGMVEA). 3 disulfide bridges follow: C29–C50, C36–C58, and C40–C60.

This sequence belongs to the invertebrate defensin family. Type 2 subfamily. As to expression, highly expressed in non-venom gland (hemolymph) and moderately expressed in venom gland.

The protein resides in the secreted. Antibacterial peptide active against Gram-positive bacteria, but not on Gram-negative bacteria. Also has weak blocking activity on Kv1.1/KCNA1, Kv1.2/KCNA2, Kv1.3/KCNA3, KCa3.1/KCNN4/IK, KCa2.3/KCNN3/SK3 and Kv11.1/KCNH2/ERG1 channels (tested at 1 uM). It inhibits potassium channel current by interacting with the pore region. The sequence is that of Defensin BmKDfsin1 from Olivierus martensii (Manchurian scorpion).